A 547-amino-acid chain; its full sequence is Chaperonin GroEL (547 aa).

ATP contacts are provided by residues 30-33 (TLGP), Lys51, 87-91 (DGTTT), Gly415, 479-481 (NAA), and Asp495.

The protein belongs to the chaperonin (HSP60) family. Forms a cylinder of 14 subunits composed of two heptameric rings stacked back-to-back. Interacts with the co-chaperonin GroES.

It is found in the cytoplasm. The enzyme catalyses ATP + H2O + a folded polypeptide = ADP + phosphate + an unfolded polypeptide.. In terms of biological role, together with its co-chaperonin GroES, plays an essential role in assisting protein folding. The GroEL-GroES system forms a nano-cage that allows encapsulation of the non-native substrate proteins and provides a physical environment optimized to promote and accelerate protein folding. The chain is Chaperonin GroEL from Pseudomonas putida (strain GB-1).